Here is a 376-residue protein sequence, read N- to C-terminus: Proteasome-interacting protein CIC1 (376 aa).

2 disordered regions span residues M1 to S29 and R356 to S376. The segment at E310–S376 is required for interaction with CDC4. Basic and acidic residues predominate over residues S357 to S376.

As to quaternary structure, interacts with CDC4, PRE4, PRE6, RPT1 and SCL1 as part of the fully assembled 26S proteasome. Interacts with pre-ribosomal particles constituent NOP7.

Its subcellular location is the nucleus. The protein resides in the nucleolus. An adapter protein that specifically links the 26S proteasome to its substrate CDC4 which is one of the substrate recognition subunits of the SCF E3 ubiquitin ligase complex. Required for turnover of cell cycle regulatory proteins CDC4 and GRR1. Required for synthesis and nuclear export of 60S ribosomal subunits. Required for vegetative growth. The sequence is that of Proteasome-interacting protein CIC1 (CIC1) from Saccharomyces cerevisiae (strain ATCC 204508 / S288c) (Baker's yeast).